The primary structure comprises 190 residues: Elongation factor P-like protein (190 aa).

Belongs to the elongation factor P family.

The sequence is that of Elongation factor P-like protein from Proteus mirabilis (strain HI4320).